Here is a 365-residue protein sequence, read N- to C-terminus: tRNA-specific 2-thiouridylase MnmA (365 aa).

Residues 9 to 16 and M35 each bind ATP; that span reads GLSGGVDS. An interaction with target base in tRNA region spans residues 95-97; the sequence is NPD. C100 acts as the Nucleophile in catalysis. An intrachain disulfide couples C100 to C196. Residue G124 participates in ATP binding. The tract at residues 146-148 is interaction with tRNA; that stretch reads KDQ. C196 serves as the catalytic Cysteine persulfide intermediate. Residues 315-316 are interaction with tRNA; it reads RY.

The protein belongs to the MnmA/TRMU family.

The protein localises to the cytoplasm. The enzyme catalyses S-sulfanyl-L-cysteinyl-[protein] + uridine(34) in tRNA + AH2 + ATP = 2-thiouridine(34) in tRNA + L-cysteinyl-[protein] + A + AMP + diphosphate + H(+). In terms of biological role, catalyzes the 2-thiolation of uridine at the wobble position (U34) of tRNA, leading to the formation of s(2)U34. In Dechloromonas aromatica (strain RCB), this protein is tRNA-specific 2-thiouridylase MnmA.